The chain runs to 468 residues: Lactate utilization protein B (468 aa).

2 consecutive 4Fe-4S ferredoxin-type domains span residues glycine 303–tyrosine 333 and tyrosine 352–leucine 381. [4Fe-4S] cluster contacts are provided by cysteine 312, cysteine 315, cysteine 318, cysteine 322, cysteine 365, cysteine 368, and cysteine 372. The tract at residues proline 442 to alanine 468 is disordered. Over residues threonine 457–alanine 468 the composition is skewed to basic and acidic residues.

Belongs to the LutB/YkgF family.

Is involved in L-lactate degradation and allows cells to grow with lactate as the sole carbon source. Has probably a role as an electron transporter during oxidation of L-lactate. The protein is Lactate utilization protein B of Exiguobacterium sp. (strain ATCC BAA-1283 / AT1b).